The primary structure comprises 1969 residues: Echinoderm microtubule-associated protein-like 5 (1969 aa).

10 WD repeats span residues 59-100 (GHSD…TISV), 104-145 (VHTH…MLSM), 148-187 (GHTD…LTPK), 195-233 (GDLQ…RTIQ), 235-273 (AHAA…TVID), 280-321 (GYKG…LIMQ), 323-362 (HCEG…LIAR), 406-445 (DRKE…KKVG), 449-488 (GSLS…EVTS), and 561-601 (GHSA…KLKD). The disordered stretch occupies residues 609 to 633 (ESLADSHSDESDSDLSDVPELDSEI). Residues 619 to 633 (SDSDLSDVPELDSEI) are compositionally biased toward acidic residues. WD repeat units follow at residues 725–766 (GHDD…PLSI), 770–811 (HHQY…KLSI), 814–853 (GSKD…LIGR), 861–900 (GKND…KTVK), 901–940 (AHDG…KTYA), 996–1035 (HMEG…CMLA), 1038–1077 (KLKK…DLVS), 1080–1120 (HRKD…RVGI), and 1236–1276 (AHST…YREK). 2 disordered regions span residues 1274-1297 (REKR…YDSD) and 1326-1355 (QQKE…NVGK). A compositionally biased stretch (acidic residues) spans 1281–1294 (SEESDIDSEEDGGY). Residues 1326–1337 (QQKEPSIDERPP) show a composition bias toward basic and acidic residues. 10 WD repeats span residues 1412–1463 (EHND…TLSI), 1467–1508 (YHSK…KIAS), 1511–1550 (GHNQ…LLSK), 1560–1598 (ARMQ…RIVA), 1600–1646 (AHNG…RAFR), 1691–1731 (GHVD…MLNK), 1733–1774 (NLGH…GKKR), 1775–1814 (DRRC…TLNR), 1887–1926 (AEKA…KFAK), and 1932–1969 (GHSP…HTPH).

This sequence belongs to the WD repeat EMAP family.

It is found in the cytoplasm. The protein localises to the cytoskeleton. Functionally, may modify the assembly dynamics of microtubules, such that microtubules are slightly longer, but more dynamic. This is Echinoderm microtubule-associated protein-like 5 (EML5) from Homo sapiens (Human).